Reading from the N-terminus, the 302-residue chain is Sulfate adenylyltransferase subunit 2 (302 aa).

The segment at 280 to 302 is disordered; it reads RQGRVIDHDSSGSMEKKKREGYF.

The protein belongs to the PAPS reductase family. CysD subfamily. Heterodimer composed of CysD, the smaller subunit, and CysN.

The catalysed reaction is sulfate + ATP + H(+) = adenosine 5'-phosphosulfate + diphosphate. It functions in the pathway sulfur metabolism; hydrogen sulfide biosynthesis; sulfite from sulfate: step 1/3. Functionally, with CysN forms the ATP sulfurylase (ATPS) that catalyzes the adenylation of sulfate producing adenosine 5'-phosphosulfate (APS) and diphosphate, the first enzymatic step in sulfur assimilation pathway. APS synthesis involves the formation of a high-energy phosphoric-sulfuric acid anhydride bond driven by GTP hydrolysis by CysN coupled to ATP hydrolysis by CysD. In Shewanella amazonensis (strain ATCC BAA-1098 / SB2B), this protein is Sulfate adenylyltransferase subunit 2.